Reading from the N-terminus, the 310-residue chain is 26S proteasome non-ATPase regulatory subunit 7 homolog B (310 aa).

The residue at position 1 (M1) is an N-acetylmethionine. One can recognise an MPN domain in the interval 17 to 154; the sequence is VIVHPLVLLS…YYAVEEVKEN (138 aa).

This sequence belongs to the peptidase M67A family. As to quaternary structure, component of the 19S regulatory particle (RP/PA700) lid subcomplex of the 26S proteasome. The 26S proteasome is composed of a core protease (CP), known as the 20S proteasome, capped at one or both ends by the 19S regulatory particle (RP/PA700). The RP/PA700 complex is composed of at least 17 different subunits in two subcomplexes, the base and the lid, which form the portions proximal and distal to the 20S proteolytic core, respectively.

In terms of biological role, acts as a regulatory subunit of the 26S proteasome which is involved in the ATP-dependent degradation of ubiquitinated proteins. This Arabidopsis thaliana (Mouse-ear cress) protein is 26S proteasome non-ATPase regulatory subunit 7 homolog B (RPN8B).